A 430-amino-acid polypeptide reads, in one-letter code: Probable acetate kinase (430 aa).

N12 provides a ligand contact to Mg(2+). Position 19 (K19) interacts with ATP. R100 contacts substrate. D159 functions as the Proton donor/acceptor in the catalytic mechanism. Residue 220–224 (HLGSG) participates in ATP binding. Position 416 (E416) interacts with Mg(2+).

This sequence belongs to the acetokinase family. Requires Mg(2+) as cofactor.

The enzyme catalyses acetate + ATP = acetyl phosphate + ADP. It participates in metabolic intermediate biosynthesis; acetyl-CoA biosynthesis; acetyl-CoA from acetate: step 1/2. The chain is Probable acetate kinase from Cryptococcus neoformans var. neoformans serotype D (strain B-3501A) (Filobasidiella neoformans).